Here is a 370-residue protein sequence, read N- to C-terminus: DNA replication and repair protein RecF (370 aa).

30–37 (GENAQGKT) provides a ligand contact to ATP.

It belongs to the RecF family.

The protein localises to the cytoplasm. Functionally, the RecF protein is involved in DNA metabolism; it is required for DNA replication and normal SOS inducibility. RecF binds preferentially to single-stranded, linear DNA. It also seems to bind ATP. The sequence is that of DNA replication and repair protein RecF from Bacillus pumilus (strain SAFR-032).